A 644-amino-acid chain; its full sequence is Exoribonuclease 2 (644 aa).

The region spanning 189-516 (REDLTSLDFV…NHRLLKAVIK (328 aa)) is the RNB domain. The S1 motif domain maps to 561 to 643 (GTRFAAEIVD…ETRSIIARPV (83 aa)).

Belongs to the RNR ribonuclease family. RNase II subfamily.

Its subcellular location is the cytoplasm. The catalysed reaction is Exonucleolytic cleavage in the 3'- to 5'-direction to yield nucleoside 5'-phosphates.. Its function is as follows. Involved in mRNA degradation. Hydrolyzes single-stranded polyribonucleotides processively in the 3' to 5' direction. The protein is Exoribonuclease 2 of Shigella flexneri.